We begin with the raw amino-acid sequence, 459 residues long: MVQKRTAELQGFHRSFKGQNPFELAFTLDPAQHGDSDFSPQCEARPDMPSSQPIDIPDAKKRGRKKKRCRATDSFSGRFEDVYQLQEDVLGEGAHARVQTCVNLITNQEYAVKIIEKQLGHIRSRVFREVEMLYQCQGHRNVLELIEFFEEEDRFYLVFEKMRGGSILSHIHRRRHFNELEASVVVQDVASALDFLHNKGIAHRDLKPENILCEHPNQVSPVKICDFDLGSGIKLNGDCSPISTPELLTPCGSAEYMAPEVVEAFSEEASIYDKRCDLWSLGVILYILLSGYPPFVGHCGSDCGWDRGEACPACQNMLFESIQEGKYEFPDKDWSHISFAAKDLISKLLVRDAKQRLSAAQVLQHPWVQGCAPENTLPTPLVLQRNSCAKDLTSFAAEAIAMNRQLAQCEEDAGQDQPVLIRATSRCLQLSPPSQSKLAQRRQRASLSATPVVLVGDRV.

The segment at 28 to 67 (LDPAQHGDSDFSPQCEARPDMPSSQPIDIPDAKKRGRKKK) is disordered. The Nuclear localization signal signature appears at 60–66 (KKRGRKK). Phosphoserine is present on S74. Residues 84 to 368 (QLQEDVLGEG…AAQVLQHPWV (285 aa)) form the Protein kinase domain. ATP-binding positions include 90 to 98 (LGEGAHARV) and K113. 160–162 (EKM) provides a ligand contact to staurosporine. D205 serves as the catalytic Proton acceptor. E209 is a staurosporine binding site. T244 and T249 each carry phosphothreonine. Zn(2+)-binding residues include C299, C311, and C314. Phosphothreonine is present on T379. Phosphoserine occurs at positions 431 and 434. The MAP kinase binding motif lies at 438-442 (LAQRR). S446 is subject to Phosphoserine. T450 bears the Phosphothreonine mark.

Belongs to the protein kinase superfamily. CAMK Ser/Thr protein kinase family. As to quaternary structure, monomer. Interacts with the C-terminal regions of EIF4G1 and EIF4G2; this interaction is promoted when MAPK pathways are repressed but repressed upon ERK proteins activation. Also binds to dephosphorylated MAPK3/ERK1 and MAPK1/ER2K. Interaction with phosphorylated MAPK3/ERK1 and MAPK1/ER2K protects it from dephosphorylation and inactivation. Interacts with ESR2 and EIF4E in the nucleus. The cofactor is Mg(2+). It depends on Zn(2+) as a cofactor. Dual phosphorylation of Thr-244 and Thr-249 activates the kinase. Phosphorylation of Thr-379 activates the kinase. Phosphorylated upon arsenic trioxide As(2)O(3) treatment. Phosphorylated by MAPK1/ERK2, MAPK11 and MAPK14. Dephosphorylated by PP2A.

Its subcellular location is the cytoplasm. It localises to the nucleus. It is found in the PML body. The enzyme catalyses L-seryl-[protein] + ATP = O-phospho-L-seryl-[protein] + ADP + H(+). The catalysed reaction is L-threonyl-[protein] + ATP = O-phospho-L-threonyl-[protein] + ADP + H(+). With respect to regulation, inhibited by CGP57380 and staurosporine. Serine/threonine-protein kinase that phosphorylates SFPQ/PSF, HNRNPA1 and EIF4E. May play a role in the response to environmental stress and cytokines. Appears to regulate translation by phosphorylating EIF4E, thus increasing the affinity of this protein for the 7-methylguanosine-containing mRNA cap. Required for mediating PP2A-inhibition-induced EIF4E phosphorylation. Triggers EIF4E shuttling from cytoplasm to nucleus. Enhances the formation of EIF4F complex in pachytene spermatocytes, thus promoting mRNA translation during spermatogenesis. Displays a high basal kinase activity. Acts as a mediator of the suppressive effects of IFNgamma on hematopoiesis. Negative regulator for signals that control generation of arsenic trioxide As(2)O(3)-dependent apoptosis and anti-leukemic responses. Involved in anti-apoptotic signaling in response to serum withdrawal. This Rattus norvegicus (Rat) protein is MAP kinase-interacting serine/threonine-protein kinase 2 (Mknk2).